The following is a 694-amino-acid chain: MAREYKIEDYRNFGIMAHIDAGKTTMTERILFYTGKNHKIGETHDGASTMDWMEQEQERGITITSAATTTFWEGRDGRKRRFNIIDTPGHVDFTIEVERSLRVLDGAIALLDANAGVEPQTETVWRQAEKYRVPRMVFVNKMDKIGADFYRSVEMVGSRLGAKALVVQLPIGAENDFEGVVDLVEMKALKWDGSIGAPAVIGEIPSDLKEKAEEYREKLIEMAVEVDEAAMEAYLEGVMPTNEQLVSLIRKGTVEVQFHPVLCGTAFKNKGVQPLLDAVVSYLPSPIDIPAIKGIDVKTEAETTRESSDDAPLSMLAFKIMNDPFVGSLTFCRIYSGKVHKGVSLENTVKKKKERLGRMLQMHSNSREDIEEAFAGDIVALAGLKETTTGDTLCDPLKPVILERMEFPEPVIEIAIEPKTKADQEKMGIALNRLAAEDPSFRVKSDEESGQTIIAGMGELHLDIIVDRMRREFKVEANVGQPQVAYRESITKTAEIDYTHKKQSGGAGQFARVKIVFEPHEGDDFIFESKIVGGAVPKEYIPGVQKGIESVMGSGPLAGFPMLGVKATLIDGGYHDVDSSVLAFEIAARAAFRDGAKKAGAQLLEPIMKVEVVTPDDYVGDVIGDLNSRRGQISGTEARGIATVVNAMVPLANMFGYVNTLRSMSQGRAQYTMQFDHYEPVPSAVALEIQKKYA.

In terms of domain architecture, tr-type G spans 8–287; sequence EDYRNFGIMA…AVVSYLPSPI (280 aa). GTP is bound by residues 17 to 24, 86 to 90, and 140 to 143; these read AHIDAGKT, DTPGH, and NKMD.

It belongs to the TRAFAC class translation factor GTPase superfamily. Classic translation factor GTPase family. EF-G/EF-2 subfamily.

Its subcellular location is the cytoplasm. Functionally, catalyzes the GTP-dependent ribosomal translocation step during translation elongation. During this step, the ribosome changes from the pre-translocational (PRE) to the post-translocational (POST) state as the newly formed A-site-bound peptidyl-tRNA and P-site-bound deacylated tRNA move to the P and E sites, respectively. Catalyzes the coordinated movement of the two tRNA molecules, the mRNA and conformational changes in the ribosome. The polypeptide is Elongation factor G (Bartonella tribocorum (strain CIP 105476 / IBS 506)).